A 581-amino-acid chain; its full sequence is NADH-quinone oxidoreductase subunit C/D (581 aa).

The interval 1–172 (MSGTDLVSEL…PLFNMTAALF (172 aa)) is NADH dehydrogenase I subunit C. The tract at residues 196 to 581 (ELMILNYGPH…IDYVMSDVDR (386 aa)) is NADH dehydrogenase I subunit D.

The protein in the N-terminal section; belongs to the complex I 30 kDa subunit family. It in the C-terminal section; belongs to the complex I 49 kDa subunit family. In terms of assembly, NDH-1 is composed of 13 different subunits. Subunits NuoB, CD, E, F, and G constitute the peripheral sector of the complex.

It is found in the cell inner membrane. The catalysed reaction is a quinone + NADH + 5 H(+)(in) = a quinol + NAD(+) + 4 H(+)(out). Functionally, NDH-1 shuttles electrons from NADH, via FMN and iron-sulfur (Fe-S) centers, to quinones in the respiratory chain. The immediate electron acceptor for the enzyme in this species is believed to be ubiquinone. Couples the redox reaction to proton translocation (for every two electrons transferred, four hydrogen ions are translocated across the cytoplasmic membrane), and thus conserves the redox energy in a proton gradient. The chain is NADH-quinone oxidoreductase subunit C/D from Rhodopseudomonas palustris (strain BisB5).